Consider the following 350-residue polypeptide: Phosphatidylinositol transfer protein PDR17 (350 aa).

Residues 139–297 (KVAVENETGK…LYNGLLDFKY (159 aa)) form the CRAL-TRIO domain.

As to quaternary structure, interacts with phosphatidylserine decarboxylase PSD2. Also interacts with PBI1.

The protein resides in the cytoplasm. It is found in the microsome. The enzyme catalyses a 1,2-diacyl-sn-glycero-3-phospho-(1D-myo-inositol)(in) = a 1,2-diacyl-sn-glycero-3-phospho-(1D-myo-inositol)(out). Has phosphatidylinositol transfer activity. Involved in the regulation of the phospholipid composition of plasma- and endomembranes. Altering plasma membrane composition may provide a possible mechanism for multidrug resistance. Contributes to efficient phospholipase D1 activation and phospholipase B1 inhibition in the regulation of phospholipid turnover. Forms a complex with phosphatidylserine decarboxylase PSD2 that seems essential for maintenance of vacuolar phosphatidylethanolamine (PE) levels. Allows interorganelle phosphatidylserine (PtdSer) transport via a process that involves the acceptor membrane complex PDR17-PDS2 that binds to PBI1 which in turn ligates to SCS2 and phosphatidic acid present in the donor membrane, forming a zone of apposition that facilitates PtdSer transfer. This Saccharomyces cerevisiae (strain ATCC 204508 / S288c) (Baker's yeast) protein is Phosphatidylinositol transfer protein PDR17.